The following is a 556-amino-acid chain: 2-succinyl-5-enolpyruvyl-6-hydroxy-3-cyclohexene-1-carboxylate synthase (556 aa).

Belongs to the TPP enzyme family. MenD subfamily. Homodimer. It depends on Mg(2+) as a cofactor. Mn(2+) is required as a cofactor. Requires thiamine diphosphate as cofactor.

It carries out the reaction isochorismate + 2-oxoglutarate + H(+) = 5-enolpyruvoyl-6-hydroxy-2-succinyl-cyclohex-3-ene-1-carboxylate + CO2. It functions in the pathway quinol/quinone metabolism; 1,4-dihydroxy-2-naphthoate biosynthesis; 1,4-dihydroxy-2-naphthoate from chorismate: step 2/7. The protein operates within quinol/quinone metabolism; menaquinone biosynthesis. Functionally, catalyzes the thiamine diphosphate-dependent decarboxylation of 2-oxoglutarate and the subsequent addition of the resulting succinic semialdehyde-thiamine pyrophosphate anion to isochorismate to yield 2-succinyl-5-enolpyruvyl-6-hydroxy-3-cyclohexene-1-carboxylate (SEPHCHC). This is 2-succinyl-5-enolpyruvyl-6-hydroxy-3-cyclohexene-1-carboxylate synthase from Escherichia coli (strain 55989 / EAEC).